A 675-amino-acid polypeptide reads, in one-letter code: UvrABC system protein B (675 aa).

One can recognise a Helicase ATP-binding domain in the interval 32-417 (EGLSDGLAYQ…EHAGQVVEQV (386 aa)). Position 45-52 (45-52 (GVTGSGKT)) interacts with ATP. Positions 98–121 (YYDYYQPEAYVPSRDLFIEKDSAI) match the Beta-hairpin motif. Positions 436 to 602 (QVDDLMSEIN…QIKKQVKDII (167 aa)) constitute a Helicase C-terminal domain. Residues 634-669 (IKEIAKLEKAMQQAARDLQFEEAAVLRDRIRNIKEN) enclose the UVR domain.

This sequence belongs to the UvrB family. As to quaternary structure, forms a heterotetramer with UvrA during the search for lesions. Interacts with UvrC in an incision complex.

It localises to the cytoplasm. The UvrABC repair system catalyzes the recognition and processing of DNA lesions. A damage recognition complex composed of 2 UvrA and 2 UvrB subunits scans DNA for abnormalities. Upon binding of the UvrA(2)B(2) complex to a putative damaged site, the DNA wraps around one UvrB monomer. DNA wrap is dependent on ATP binding by UvrB and probably causes local melting of the DNA helix, facilitating insertion of UvrB beta-hairpin between the DNA strands. Then UvrB probes one DNA strand for the presence of a lesion. If a lesion is found the UvrA subunits dissociate and the UvrB-DNA preincision complex is formed. This complex is subsequently bound by UvrC and the second UvrB is released. If no lesion is found, the DNA wraps around the other UvrB subunit that will check the other stand for damage. This Neisseria meningitidis serogroup A / serotype 4A (strain DSM 15465 / Z2491) protein is UvrABC system protein B.